The following is a 248-amino-acid chain: Probable transcriptional regulatory protein Mchl_0946 (248 aa).

The protein belongs to the TACO1 family.

Its subcellular location is the cytoplasm. In Methylorubrum extorquens (strain CM4 / NCIMB 13688) (Methylobacterium extorquens), this protein is Probable transcriptional regulatory protein Mchl_0946.